Reading from the N-terminus, the 358-residue chain is Peptide chain release factor 1 (358 aa).

At glutamine 233 the chain carries N5-methylglutamine.

It belongs to the prokaryotic/mitochondrial release factor family. Post-translationally, methylated by PrmC. Methylation increases the termination efficiency of RF1.

It is found in the cytoplasm. Functionally, peptide chain release factor 1 directs the termination of translation in response to the peptide chain termination codons UAG and UAA. This Staphylococcus aureus (strain MRSA252) protein is Peptide chain release factor 1.